A 429-amino-acid chain; its full sequence is Adenylosuccinate synthetase (429 aa).

Residues 12–18 (GDEGKGK) and 40–42 (GHT) each bind GTP. Asp13 (proton acceptor) is an active-site residue. Residues Asp13 and Gly40 each coordinate Mg(2+). IMP is bound by residues 13–16 (DEGK), 38–41 (NAGH), Thr129, Arg143, Gln223, Thr238, and Arg302. His41 acts as the Proton donor in catalysis. Position 298-304 (298-304 (VVTGRKR)) interacts with substrate. GTP-binding positions include Arg304, 330–332 (KLD), and 412–414 (STS).

Belongs to the adenylosuccinate synthetase family. Homodimer. The cofactor is Mg(2+).

It is found in the cytoplasm. The enzyme catalyses IMP + L-aspartate + GTP = N(6)-(1,2-dicarboxyethyl)-AMP + GDP + phosphate + 2 H(+). It participates in purine metabolism; AMP biosynthesis via de novo pathway; AMP from IMP: step 1/2. Its function is as follows. Plays an important role in the de novo pathway of purine nucleotide biosynthesis. Catalyzes the first committed step in the biosynthesis of AMP from IMP. This is Adenylosuccinate synthetase from Brucella suis (strain ATCC 23445 / NCTC 10510).